The sequence spans 242 residues: Caffeoyl-CoA O-methyltransferase 4 (242 aa).

Substrate is bound at residue Lys16. S-adenosyl-L-methionine-binding positions include Thr58, Glu80, 82–83 (GV), Ser88, Asp106, and Ala135. Asp158 serves as a coordination point for substrate. Asp158 lines the a divalent metal cation pocket. Asp160 is an S-adenosyl-L-methionine binding site. Residues Asp184 and Asn185 each coordinate a divalent metal cation. Asn189 lines the substrate pocket.

It belongs to the class I-like SAM-binding methyltransferase superfamily. Cation-dependent O-methyltransferase family. CCoAMT subfamily. Mg(2+) is required as a cofactor. As to expression, mostly expressed in the bottom and middle parts of the stems.

It catalyses the reaction (E)-caffeoyl-CoA + S-adenosyl-L-methionine = (E)-feruloyl-CoA + S-adenosyl-L-homocysteine + H(+). It functions in the pathway aromatic compound metabolism; phenylpropanoid biosynthesis. Functionally, methylates caffeoyl-CoA to feruloyl-CoA and 5-hydroxyferuloyl-CoA to sinapoyl-CoA. Plays a role in the synthesis of feruloylated polysaccharides. Involved in the reinforcement of the plant cell wall. Also involved in the responding to wounding or pathogen challenge by the increased formation of cell wall-bound ferulic acid polymers. This chain is Caffeoyl-CoA O-methyltransferase 4 (CCOAOMT4), found in Nicotiana tabacum (Common tobacco).